Reading from the N-terminus, the 465-residue chain is Purple acid phosphatase 2 (465 aa).

Positions methionine 1–arginine 32 are cleaved as a signal peptide. N-linked (GlcNAc...) asparagine glycans are attached at residues asparagine 110 and asparagine 138. Residue aspartate 164 participates in Fe cation binding. N-linked (GlcNAc...) asparagine glycosylation occurs at asparagine 172. Fe cation contacts are provided by aspartate 193 and tyrosine 196. Mn(2+) is bound at residue aspartate 193. Asparagine 230 contributes to the Mn(2+) binding site. Asparagine 230 is a binding site for substrate. A glycan (N-linked (GlcNAc...) asparagine) is linked at asparagine 303. Histidine 315 contacts Mn(2+). The active-site Proton donor is the histidine 325. Histidine 352 is a Mn(2+) binding site. Position 352 to 354 (histidine 352 to histidine 354) interacts with substrate. Histidine 354 serves as a coordination point for Fe cation. Residues asparagine 400 and asparagine 425 are each glycosylated (N-linked (GlcNAc...) asparagine).

Belongs to the metallophosphoesterase superfamily. Purple acid phosphatase family. In terms of assembly, homodimer; disulfide-linked. The cofactor is Fe cation. Mn(2+) serves as cofactor. It depends on Zn(2+) as a cofactor. Cu(2+) is required as a cofactor. Requires Mg(2+) as cofactor.

It localises to the secreted. The enzyme catalyses a phosphate monoester + H2O = an alcohol + phosphate. The chain is Purple acid phosphatase 2 (PAP2) from Ipomoea batatas (Sweet potato).